The sequence spans 69 residues: uncharacterized protein (69 aa).

The interval E48 to D69 is disordered.

This is an uncharacterized protein from Salmonella phage P22 (Bacteriophage P22).